Here is a 525-residue protein sequence, read N- to C-terminus: Chromosomal replication initiator protein DnaA (525 aa).

The domain I, interacts with DnaA modulators stretch occupies residues 1–71 (MNDFWQHCSA…SDLAREFWNT (71 aa)). Residues 71–188 (TPIEVQFVLD…GEADSMYERS (118 aa)) are domain II. Residues 162-182 (AGRRTWRPGPGAAPANGGEAD) form a disordered region. Residues 169 to 181 (PGPGAAPANGGEA) show a composition bias toward low complexity. Residues 189–405 (KLNPVLTFDN…GALRKILAYS (217 aa)) form a domain III, AAA+ region region. Positions 233, 235, 236, and 237 each coordinate ATP. The tract at residues 406–525 (KFHGREISIE…LHVLEQTLKG (120 aa)) is domain IV, binds dsDNA.

Belongs to the DnaA family. In terms of assembly, oligomerizes as a right-handed, spiral filament on DNA at oriC.

It is found in the cytoplasm. Plays an essential role in the initiation and regulation of chromosomal replication. ATP-DnaA binds to the origin of replication (oriC) to initiate formation of the DNA replication initiation complex once per cell cycle. Binds the DnaA box (a 9 base pair repeat at the origin) and separates the double-stranded (ds)DNA. Forms a right-handed helical filament on oriC DNA; dsDNA binds to the exterior of the filament while single-stranded (ss)DNA is stabiized in the filament's interior. The ATP-DnaA-oriC complex binds and stabilizes one strand of the AT-rich DNA unwinding element (DUE), permitting loading of DNA polymerase. After initiation quickly degrades to an ADP-DnaA complex that is not apt for DNA replication. Binds acidic phospholipids. The polypeptide is Chromosomal replication initiator protein DnaA (Burkholderia cenocepacia (strain HI2424)).